The primary structure comprises 577 residues: MLHEIILLLAGNTSGLFIEKNGQILLHPSVQPLHPGERELINDIVSLASKRKRIERYIEIFDEDLIQQNQFLLKALRLLLSKKLFLYDESLANLERMIISSDPYFVGSGKFVSLAQLEAHLADWKETLSSLLVLQGNISQCLSVASTFQKLHNMYMGSTHLNFKKLVLECECAFQKTWLDELVQYLVNDSGDDSFKCSFLCGDTKDFVSCSNNVPFLTQDIVNCLVSIRTCMLNAKKCFTDAFCEILRCFYRLVYEMPLPLTKSSVTKLADEMFTLVSEKIIFQLASFHQIFDLVKMLEMVMLLENVEFLPTLSEMFRDVRGEYCSSNDVQGVVIDDILPVVLRKTISLLDLATEYGECVSFLKLVSIFDEEDEMIRSENRKIDVEGLNMQLLLCLKWPFNLFMDKNALNVYSDLWILLGSLHLSITKIKSLFYERKEYTAKGISQPWTQLWVTLWFLSSLQYYAYECVIKPSYCKLRESLTELYRTQKLRMQDCSQLHALTLTYAKKMLFFYDDDLHISLNSIYHELSLFRSQEVSKVDCQLAAHVSHSIECIRQKENDPSYDREIINALIVQLNL.

Belongs to the TUBGCP family.

It localises to the cytoplasm. The protein localises to the cytoskeleton. It is found in the microtubule organizing center. Its subcellular location is the spindle pole body. Its function is as follows. Required for proper anchoring of astral microtubules at the spindle pole bodies (SPBs), during anaphase, ensuring correct cell polarity. The polypeptide is Gamma-tubulin complex component gfh1 (gfh1) (Schizosaccharomyces pombe (strain 972 / ATCC 24843) (Fission yeast)).